The sequence spans 119 residues: MLKSTTRHVHIFAADIRNDNFIASDTKLTLDVDPDNEFIWNDPALQKVYSEFDRLVAAYTGLALTEYNLRRIGSDLENFIRGLLQQGEIAYNLDSRVLNFSMGRPQVRGPGQIENRPGQ.

Belongs to the complex I NdhM subunit family. In terms of assembly, NDH-1 can be composed of about 15 different subunits; different subcomplexes with different compositions have been identified which probably have different functions.

The protein localises to the cell inner membrane. It carries out the reaction a plastoquinone + NADH + (n+1) H(+)(in) = a plastoquinol + NAD(+) + n H(+)(out). The catalysed reaction is a plastoquinone + NADPH + (n+1) H(+)(in) = a plastoquinol + NADP(+) + n H(+)(out). NDH-1 shuttles electrons from an unknown electron donor, via FMN and iron-sulfur (Fe-S) centers, to quinones in the respiratory and/or the photosynthetic chain. The immediate electron acceptor for the enzyme in this species is believed to be plastoquinone. Couples the redox reaction to proton translocation, and thus conserves the redox energy in a proton gradient. Cyanobacterial NDH-1 also plays a role in inorganic carbon-concentration. The protein is NAD(P)H-quinone oxidoreductase subunit M of Gloeobacter violaceus (strain ATCC 29082 / PCC 7421).